Here is a 161-residue protein sequence, read N- to C-terminus: Afimbrial adhesin AFA-I (161 aa).

The first 21 residues, methionine 1–alanine 21, serve as a signal peptide directing secretion.

This sequence belongs to the Dr-adhesin family.

The protein resides in the fimbrium. Functionally, hemagglutinins of uropathogenic E.coli mediate adherence to the upper urinary tract. These adhesins bind to the Dr blood group antigen and also agglutinate human erythrocytes in the presence of D-mannose (mannose-resistant hemagglutination (MRHA)). The protein is Afimbrial adhesin AFA-I (afaE1) of Escherichia coli.